Reading from the N-terminus, the 231-residue chain is Uracil phosphoribosyltransferase (231 aa).

38–42 (KGLVR) is a binding site for GTP. 5-phospho-alpha-D-ribose 1-diphosphate-binding positions include arginine 87, arginine 112, and 140–148 (DPMIATGST). Residues isoleucine 203 and 208–210 (GDA) each bind uracil. A 5-phospho-alpha-D-ribose 1-diphosphate-binding site is contributed by aspartate 209.

Belongs to the UPRTase family. It depends on Mg(2+) as a cofactor.

It catalyses the reaction UMP + diphosphate = 5-phospho-alpha-D-ribose 1-diphosphate + uracil. The protein operates within pyrimidine metabolism; UMP biosynthesis via salvage pathway; UMP from uracil: step 1/1. Allosterically activated by GTP. In terms of biological role, catalyzes the conversion of uracil and 5-phospho-alpha-D-ribose 1-diphosphate (PRPP) to UMP and diphosphate. In Methanococcus maripaludis (strain C5 / ATCC BAA-1333), this protein is Uracil phosphoribosyltransferase.